We begin with the raw amino-acid sequence, 693 residues long: MIQSAAPSCRRWWALGFAAVALWVDSTSGWTTQRPPMAGLRRFQSSAWYMSSSSTEKPTTSGTINGGGGKQKAASQPKKTAGIVYDAQKIRNFSIIAHIDHGKSTLADRLLETTQTVAQRDMEAQLLDNMDLERERGITIKLQAARVLYQARDGEMYCLNLIDTPGHVDFSYEVSRSLAACEGALLVVDASQGIEAQTLANVYLALENDLEIIPILNKIDLPAADPERVAEEIEATIGLDCSGIVHASAKTGIGIDDILERIVQMVPPPPAATGGPFRALIFDSYYDAYRGVIVFFRVMDGEVSQGDKVRFLASDAEHDVTEVGIMQPNQVPVDCLHAGEVGYLWGNIKDVLDARVGDTIVLAKEYKESASKGKSPPIEALPGYADSVPMVYCGLFPVDADQYESLRDALGKLRLNDAALSYEPESSGAMGFGFRCGFLGLLHMEIVQERLQREYDIDLIVTAPSVVYKVKKEHQEEFFIDTPAKMPDLGRNDVALEPYVRMEVLTPSEYNGAIIELGQERRGDLIDIKFLTPTRSTIVYELPLAEVITDFFDQLKSRTKGYASMEYSLIDYRASDLVRLDVKINYEMAPPLACVVHRDKAQSIGRRLCASLKDLIPRQMFKIPIQACIGVKVIASESISPMRKDVLAKCYGGDISRKKKLLQKQAKGKKRMKSIGKVNVPQEAFMAVLKLNE.

Positions 51–63 are enriched in polar residues; it reads SSSSTEKPTTSGT. Residues 51 to 78 form a disordered region; that stretch reads SSSSTEKPTTSGTINGGGGKQKAASQPK. The tr-type G domain maps to 88–270; sequence QKIRNFSIIA…RIVQMVPPPP (183 aa). Residues 97–104, 163–167, and 217–220 each bind GTP; these read AHIDHGKS, DTPGH, and NKID.

This sequence belongs to the TRAFAC class translation factor GTPase superfamily. Classic translation factor GTPase family. LepA subfamily.

It is found in the mitochondrion inner membrane. The catalysed reaction is GTP + H2O = GDP + phosphate + H(+). Functionally, promotes mitochondrial protein synthesis. May act as a fidelity factor of the translation reaction, by catalyzing a one-codon backward translocation of tRNAs on improperly translocated ribosomes. Binds to mitochondrial ribosomes in a GTP-dependent manner. This is Translation factor GUF1 homolog, mitochondrial from Phaeodactylum tricornutum (strain CCAP 1055/1).